Here is a 253-residue protein sequence, read N- to C-terminus: Putative B3 domain-containing protein Os03g0619850 (253 aa).

The segment at residues 26–119 is a DNA-binding region (TF-B3); sequence MSCFLIRMTT…CFEVMILDSD (94 aa). Disordered regions lie at residues 126–150 and 230–253; these read LKSN…AGPP and HRDA…EQDS. Over residues 230 to 239 the composition is skewed to basic and acidic residues; sequence HRDADQERQM.

It localises to the nucleus. In Oryza sativa subsp. japonica (Rice), this protein is Putative B3 domain-containing protein Os03g0619850.